A 95-amino-acid chain; its full sequence is MKFPKRIRTYCPRCNTHTEHRVAQYRAGKRRAMALGERRYRRKQEGYGSQRRPEQKRFAKVTKKQVLVITCTVCGRKRPFLGIRLKRLELVDVVR.

Zn(2+) is bound by residues Cys11, Cys14, Cys71, and Cys74. Residues 11–74 (CPRCNTHTEH…QVLVITCTVC (64 aa)) form a C4-type zinc finger.

It belongs to the eukaryotic ribosomal protein eL42 family. As to quaternary structure, part of the 50S ribosomal subunit. The cofactor is Zn(2+).

Binds to the 23S rRNA. This chain is Large ribosomal subunit protein eL42, found in Aeropyrum pernix (strain ATCC 700893 / DSM 11879 / JCM 9820 / NBRC 100138 / K1).